A 372-amino-acid chain; its full sequence is Glutamine synthetase (372 aa).

A GS beta-grasp domain is found at 26 to 105 (IIAEYVWIDS…VLAECWNNDG (80 aa)). Positions 112-372 (HRHEAAKLFE…MTKEYERESL (261 aa)) constitute a GS catalytic domain.

It belongs to the glutamine synthetase family. In terms of assembly, homooctamer.

The protein localises to the cytoplasm. It catalyses the reaction L-glutamate + NH4(+) + ATP = L-glutamine + ADP + phosphate + H(+). The sequence is that of Glutamine synthetase (GLN1) from Kluyveromyces lactis (strain ATCC 8585 / CBS 2359 / DSM 70799 / NBRC 1267 / NRRL Y-1140 / WM37) (Yeast).